The chain runs to 208 residues: Calcyphosin-like protein (208 aa).

EF-hand domains follow at residues 39–74 (AGIKGLGRVFRIMDDNNNRTLDFKEFLKGLNDYAVV), 75–110 (MEKEEAEELFQRFDRDGSGTIDFNEFLLTLRPPMSR), 111–146 (ARKEVIMKAFRKLDKTGDGVITIEDLREVYNAKHHP), and 154–191 (TEEQVFRKFLDNFDSPYDKDGLVTPEEFMNYYAGVSAS). Residues Asp52, Asn54, Asn56, Thr58, Glu63, Asp88, Asp90, Ser92, Thr94, and Glu99 each coordinate Ca(2+).

The protein localises to the cytoplasm. The protein is Calcyphosin-like protein (Capsl) of Mus musculus (Mouse).